The sequence spans 177 residues: Large ribosomal subunit protein uL6 (177 aa).

It belongs to the universal ribosomal protein uL6 family. Part of the 50S ribosomal subunit.

This protein binds to the 23S rRNA, and is important in its secondary structure. It is located near the subunit interface in the base of the L7/L12 stalk, and near the tRNA binding site of the peptidyltransferase center. This Bartonella bacilliformis (strain ATCC 35685 / KC583 / Herrer 020/F12,63) protein is Large ribosomal subunit protein uL6.